We begin with the raw amino-acid sequence, 402 residues long: Rubredoxin-oxygen oxidoreductase (402 aa).

The interval 30–216 (PMGTTYNAYL…KAIETLVGAG (187 aa)) is zinc metallo-hydrolase. Fe cation is bound by residues His-79, Glu-81, Asp-83, His-146, Asp-165, and His-226. In terms of domain architecture, Flavodoxin-like spans 255–393 (VVIFYDSMWH…QLKTMAQTIA (139 aa)).

In the N-terminal section; belongs to the zinc metallo-hydrolase group 3 family. As to quaternary structure, homodimer. FMN is required as a cofactor. Fe cation serves as cofactor.

Its pathway is energy metabolism; electron transfer. In terms of biological role, catalyzes the four-electron reduction of one oxygen molecule to two water molecules. In Megalodesulfovibrio gigas (strain ATCC 19364 / DSM 1382 / NCIMB 9332 / VKM B-1759) (Desulfovibrio gigas), this protein is Rubredoxin-oxygen oxidoreductase (roo).